We begin with the raw amino-acid sequence, 186 residues long: Intraflagellar transport protein 27 homolog (186 aa).

Residues Gly-12–Thr-19, Asp-64–Lys-68, and Asn-123–Asp-126 each bind GTP.

The protein belongs to the small GTPase superfamily. Rab family. In terms of assembly, component of the IFT complex B, at least composed of IFT20, IFT25, IFT27, IFT52, IFT57, IFT74, IFT81, IFT88 and TRAF3IP1. Interacts with IFT25. Interacts with IFT70B. Interacts with RABL2/RABL2A; binding is equal in the presence of GTP or GDP. Interacts with ARL6; recognizes and binds with the GTP-free form of ARL6.

Its subcellular location is the cell projection. It is found in the cilium. It localises to the cytoplasm. The protein localises to the flagellum. Small GTPase-like component of the intraflagellar transport (IFT) complex B that promotes the exit of the BBSome complex from cilia via its interaction with ARL6. Not involved in entry of the BBSome complex into cilium. Prevents aggregation of GTP-free ARL6. Required for hedgehog signaling. Forms a subcomplex within the IFT complex B with IFT25. Its role in intraflagellar transport is mainly seen in tissues rich in ciliated cells such as kidney and testis. Essential for male fertility, spermiogenesis and sperm flagella formation. Plays a role in the early development of the kidney. May be involved in the regulation of ureteric bud initiation. This Homo sapiens (Human) protein is Intraflagellar transport protein 27 homolog (IFT27).